Reading from the N-terminus, the 1790-residue chain is Protein FAM186A (1790 aa).

The protein belongs to the FAM186 family.

The protein is Protein FAM186A (FAM186A) of Mus musculus (Mouse).